A 73-amino-acid polypeptide reads, in one-letter code: Putative membrane protein insertion efficiency factor (73 aa).

It belongs to the UPF0161 family.

The protein localises to the cell inner membrane. In terms of biological role, could be involved in insertion of integral membrane proteins into the membrane. The protein is Putative membrane protein insertion efficiency factor of Neisseria gonorrhoeae (strain ATCC 700825 / FA 1090).